Here is a 295-residue protein sequence, read N- to C-terminus: Acetylglutamate kinase (295 aa).

Substrate-binding positions include 66 to 67 (GG), arginine 88, and asparagine 193.

It belongs to the acetylglutamate kinase family. ArgB subfamily.

It localises to the cytoplasm. It catalyses the reaction N-acetyl-L-glutamate + ATP = N-acetyl-L-glutamyl 5-phosphate + ADP. The protein operates within amino-acid biosynthesis; L-arginine biosynthesis; N(2)-acetyl-L-ornithine from L-glutamate: step 2/4. Its function is as follows. Catalyzes the ATP-dependent phosphorylation of N-acetyl-L-glutamate. In Rhizobium leguminosarum bv. trifolii (strain WSM2304), this protein is Acetylglutamate kinase.